The chain runs to 218 residues: Hypoxanthine-guanine phosphoribosyltransferase (218 aa).

GMP-binding positions include Lys69, 134–142 (EDIIDTGKT), Lys166, 186–188 (KFV), and Asp194. Asp138 acts as the Proton acceptor in catalysis. Asp194 lines the Mg(2+) pocket.

The protein belongs to the purine/pyrimidine phosphoribosyltransferase family. As to quaternary structure, homotetramer. Requires Mg(2+) as cofactor.

The protein resides in the cytoplasm. The enzyme catalyses IMP + diphosphate = hypoxanthine + 5-phospho-alpha-D-ribose 1-diphosphate. It carries out the reaction GMP + diphosphate = guanine + 5-phospho-alpha-D-ribose 1-diphosphate. The protein operates within purine metabolism; IMP biosynthesis via salvage pathway; IMP from hypoxanthine: step 1/1. In terms of biological role, converts guanine to guanosine monophosphate, and hypoxanthine to inosine monophosphate. Transfers the 5-phosphoribosyl group from 5-phosphoribosylpyrophosphate onto the purine. Plays a central role in the generation of purine nucleotides through the purine salvage pathway. The chain is Hypoxanthine-guanine phosphoribosyltransferase (HPRT1) from Gallus gallus (Chicken).